Reading from the N-terminus, the 151-residue chain is Small ribosomal subunit protein uS13 (151 aa).

This sequence belongs to the universal ribosomal protein uS13 family. Part of the 30S ribosomal subunit. Forms a loose heterodimer with protein S19. Forms two bridges to the 50S subunit in the 70S ribosome.

In terms of biological role, located at the top of the head of the 30S subunit, it contacts several helices of the 16S rRNA. In the 70S ribosome it contacts the 23S rRNA (bridge B1a) and protein L5 of the 50S subunit (bridge B1b), connecting the 2 subunits; these bridges are implicated in subunit movement. The sequence is that of Small ribosomal subunit protein uS13 from Staphylothermus marinus (strain ATCC 43588 / DSM 3639 / JCM 9404 / F1).